A 329-amino-acid polypeptide reads, in one-letter code: Phosphate acyltransferase (329 aa).

This sequence belongs to the PlsX family. As to quaternary structure, homodimer. Probably interacts with PlsY.

The protein resides in the cytoplasm. It carries out the reaction a fatty acyl-[ACP] + phosphate = an acyl phosphate + holo-[ACP]. Its pathway is lipid metabolism; phospholipid metabolism. Functionally, catalyzes the reversible formation of acyl-phosphate (acyl-PO(4)) from acyl-[acyl-carrier-protein] (acyl-ACP). This enzyme utilizes acyl-ACP as fatty acyl donor, but not acyl-CoA. In Sulfurovum sp. (strain NBC37-1), this protein is Phosphate acyltransferase.